A 296-amino-acid chain; its full sequence is 6-hydroxypseudooxynicotine dehydrogenase complex subunit alpha (296 aa).

The region spanning 1–177 (MKPPSFDYVV…VEVNVPQLPH (177 aa)) is the FAD-binding PCMH-type domain. Residues 30–37 (IIAGGQSL), 111–115 (TIGGS), and E124 each bind FAD.

Heterohexamer of 2 alpha (kdhA), 2 beta (kdhB) and 2 gamma (kdhC) subunit. Dimer of heterotrimers. FAD serves as cofactor.

It catalyses the reaction 6-hydroxypseudooxynicotine + A + H2O = 2,6-dihydroxypseudooxynicotine + AH2. The protein operates within alkaloid degradation; nicotine degradation. Its function is as follows. Molybdo-flavoprotein enzyme complex involved in nicotine degradation. The subunit gamma (large subunit) contains the substrate-binding sites, the subunit alpha (medium subunit) binds FAD and the subunit beta (small subunit) has a 2Fe-2S ferredoxin-type domain which binds 2 2Fe-2S clusters. This is 6-hydroxypseudooxynicotine dehydrogenase complex subunit alpha (kdhA) from Paenarthrobacter nicotinovorans (Arthrobacter nicotinovorans).